The primary structure comprises 306 residues: ATP synthase F(1) complex subunit gamma, mitochondrial (306 aa).

Residues 1-17 constitute a mitochondrion transit peptide; it reads MNSASKLFVVLASPANQ.

The protein belongs to the ATPase gamma chain family. Component of the ATP synthase complex composed at least of ATP5F1A/subunit alpha, ATP5F1B/subunit beta, ATP5MC1/subunit c (homooctomer), MT-ATP6/subunit a, MT-ATP8/subunit 8, ATP5ME/subunit e, ATP5MF/subunit f, ATP5MG/subunit g, ATP5MK/subunit k, ATP5MJ/subunit j, ATP5F1C/subunit gamma, ATP5F1D/subunit delta, ATP5F1E/subunit epsilon, ATP5PF/subunit F6, ATP5PB/subunit b, ATP5PD/subunit d, ATP5PO/subunit OSCP. ATP synthase complex consists of a soluble F(1) head domain (subunits alpha(3) and beta(3)) - the catalytic core - and a membrane F(0) domain - the membrane proton channel (subunits c, a, 8, e, f, g, k and j). These two domains are linked by a central stalk (subunits gamma, delta, and epsilon) rotating inside the F1 region and a stationary peripheral stalk (subunits F6, b, d, and OSCP).

It localises to the mitochondrion inner membrane. Subunit gamma, of the mitochondrial membrane ATP synthase complex (F(1)F(0) ATP synthase or Complex V) that produces ATP from ADP in the presence of a proton gradient across the membrane which is generated by electron transport complexes of the respiratory chain. ATP synthase complex consist of a soluble F(1) head domain - the catalytic core - and a membrane F(1) domain - the membrane proton channel. These two domains are linked by a central stalk rotating inside the F(1) region and a stationary peripheral stalk. During catalysis, ATP synthesis in the catalytic domain of F(1) is coupled via a rotary mechanism of the central stalk subunits to proton translocation. In vivo, can only synthesize ATP although its ATP hydrolase activity can be activated artificially in vitro. With the central stalk subunit delta, is essential for the biogenesis of F(1) catalytic part of the ATP synthase complex namely in the formation of F1 assembly intermediate. The protein is ATP synthase F(1) complex subunit gamma, mitochondrial of Dictyostelium discoideum (Social amoeba).